We begin with the raw amino-acid sequence, 248 residues long: Small ribosomal subunit protein uS2 (248 aa).

It belongs to the universal ribosomal protein uS2 family.

The chain is Small ribosomal subunit protein uS2 from Cupriavidus necator (strain ATCC 17699 / DSM 428 / KCTC 22496 / NCIMB 10442 / H16 / Stanier 337) (Ralstonia eutropha).